The primary structure comprises 628 residues: Probable potassium transport system protein Kup (628 aa).

Transmembrane regions (helical) follow at residues 12 to 32 (ALPL…IGTS), 57 to 77 (LLSL…VMLV), 106 to 126 (WYLL…GVLT), 141 to 161 (ISPA…AAVF), 174 to 194 (FYGP…VYGI), 219 to 239 (LAGV…ALYA), 253 to 273 (WLFV…AILL), 295 to 315 (LLFL…TGVF), 343 to 363 (IYVG…VLGF), 369 to 389 (LASA…ILFV), 402 to 422 (AVIA…SANL), and 425 to 445 (LHEG…VMVS).

Belongs to the HAK/KUP transporter (TC 2.A.72) family.

It localises to the cell inner membrane. It catalyses the reaction K(+)(in) + H(+)(in) = K(+)(out) + H(+)(out). Functionally, transport of potassium into the cell. Likely operates as a K(+):H(+) symporter. The protein is Probable potassium transport system protein Kup of Azorhizobium caulinodans (strain ATCC 43989 / DSM 5975 / JCM 20966 / LMG 6465 / NBRC 14845 / NCIMB 13405 / ORS 571).